We begin with the raw amino-acid sequence, 264 residues long: Thymidylate synthase (264 aa).

Arginine 21 lines the dUMP pocket. Histidine 51 is a (6R)-5,10-methylene-5,6,7,8-tetrahydrofolate binding site. 126–127 (RR) is a dUMP binding site. Cysteine 146 functions as the Nucleophile in the catalytic mechanism. DUMP is bound by residues 166–169 (RSAD), asparagine 177, and 207–209 (HLY). Aspartate 169 is a binding site for (6R)-5,10-methylene-5,6,7,8-tetrahydrofolate. Alanine 263 is a binding site for (6R)-5,10-methylene-5,6,7,8-tetrahydrofolate.

Belongs to the thymidylate synthase family. Bacterial-type ThyA subfamily. As to quaternary structure, homodimer.

It is found in the cytoplasm. It catalyses the reaction dUMP + (6R)-5,10-methylene-5,6,7,8-tetrahydrofolate = 7,8-dihydrofolate + dTMP. It participates in pyrimidine metabolism; dTTP biosynthesis. Functionally, catalyzes the reductive methylation of 2'-deoxyuridine-5'-monophosphate (dUMP) to 2'-deoxythymidine-5'-monophosphate (dTMP) while utilizing 5,10-methylenetetrahydrofolate (mTHF) as the methyl donor and reductant in the reaction, yielding dihydrofolate (DHF) as a by-product. This enzymatic reaction provides an intracellular de novo source of dTMP, an essential precursor for DNA biosynthesis. In Nitrosomonas europaea (strain ATCC 19718 / CIP 103999 / KCTC 2705 / NBRC 14298), this protein is Thymidylate synthase.